Reading from the N-terminus, the 291-residue chain is Halorhodopsin (291 aa).

Residues 1-30 are Extracellular-facing; the sequence is MTETLPPVTESAVALQAEVTQRELFEFVLN. A helical membrane pass occupies residues 31 to 56; the sequence is DPLLASSLYINIALAGLSILLFVFMT. At 57–62 the chain is on the cytoplasmic side; that stretch reads RGLDDP. A helical transmembrane segment spans residues 63-86; that stretch reads RAKLIAVSTILVPVVSIASYTGLA. Topologically, residues 87–120 are extracellular; that stretch reads SGLTISVLEMPAGHFAEGSSVMLGGEEVDGVVTM. Residues 121–142 form a helical membrane-spanning segment; the sequence is WGRYLTWALSTPMILLALGLLA. The Cytoplasmic portion of the chain corresponds to 143–145; that stretch reads GSN. A helical membrane pass occupies residues 146–169; it reads ATKLFTAITFDIAMCVTGLAAALT. Residues 170 to 172 are Extracellular-facing; that stretch reads TSS. Residues 173 to 195 form a helical membrane-spanning segment; that stretch reads HLMRWFWYAISCACFLVVLYILL. At 196 to 207 the chain is on the cytoplasmic side; the sequence is VEWAQDAKAAGT. Residues 208 to 231 form a helical membrane-spanning segment; the sequence is ADMFNTLKLLTVVMWLGYPIVWAL. The Extracellular segment spans residues 232–240; it reads GVEGIAVLP. The helical transmembrane segment at 241 to 269 threads the bilayer; that stretch reads VGVTSWGYSFLDIVAKYIFAFLLLNYLTS. At Lys256 the chain carries N6-(retinylidene)lysine. The Cytoplasmic portion of the chain corresponds to 270 to 291; sequence NESVVSGSILDVPSASGTPADD.

This sequence belongs to the archaeal/bacterial/fungal opsin family.

The protein resides in the cell membrane. Its function is as follows. Light-driven anion pump. Binding affinity for the anions is in the order, bromide &gt; chloride &gt; nitrate &gt; azide &gt; bromate and binding is pH dependent. The chain is Halorhodopsin (hop) from Natronomonas pharaonis (Natronobacterium pharaonis).